A 252-amino-acid polypeptide reads, in one-letter code: Type I iodothyronine deiodinase (252 aa).

Topologically, residues 1–17 (MESLLQTIKLMLRYIQK) are extracellular. The helical; Signal-anchor for type III membrane protein transmembrane segment at 18–38 (ALILFFLFLYVVVGKVLMFLF) threads the bilayer. At 39-252 (PQTMASVLKS…EVCSVLEKKK (214 aa)) the chain is on the cytoplasmic side. Sec-130 is a catalytic residue. A non-standard amino acid (selenocysteine) is located at residue Sec-130.

It belongs to the iodothyronine deiodinase family. As to quaternary structure, predominantly monomer. Can form homodimers but homodimerization is not essential for enzyme activity.

It is found in the cell membrane. It localises to the endoplasmic reticulum membrane. Its subcellular location is the basolateral cell membrane. It carries out the reaction 3,3',5-triiodo-L-thyronine + iodide + A + H(+) = L-thyroxine + AH2. The enzyme catalyses 3,3',5'-triiodo-L-thyronine + iodide + A + H(+) = L-thyroxine + AH2. The catalysed reaction is 3,3'-diiodo-L-thyronine + iodide + A + H(+) = 3,3',5'-triiodo-L-thyronine + AH2. It catalyses the reaction 3,3'-diiodo-L-thyronine + iodide + A + H(+) = 3,3',5-triiodo-L-thyronine + AH2. It carries out the reaction 3'-iodo-L-thyronine + iodide + A + H(+) = 3',5'-diiodo-L-thyronine + AH2. The enzyme catalyses 3-iodo-L-thyronine + iodide + A + H(+) = 3,5-diiodo-L-thyronine + AH2. The catalysed reaction is 3-iodo-L-thyronine + iodide + A + H(+) = 3,3'-diiodo-L-thyronine + AH2. It catalyses the reaction 3,3'-diiodothyronamine + iodide + A + H(+) = 3,3',5'-triiodothyronamine + AH2. It carries out the reaction 3'-iodothyronamine + iodide + A + H(+) = 3',5'-diiodothyronamine + AH2. The enzyme catalyses 3-iodothyronamine + iodide + A + H(+) = 3,3'-diiodothyronamine + AH2. The catalysed reaction is 3,3'-diiodothyronamine + iodide + A + H(+) = 3,3',5-triiodothyronamine + AH2. It catalyses the reaction 3-iodothyronamine + iodide + A + H(+) = 3,5-diiodothyronamine + AH2. It carries out the reaction 3,3'-diiodo-L-thyronine sulfate + iodide + A + H(+) = 3,3',5'-triiodo-L-thyronine sulfate + AH2. The enzyme catalyses 3,3',5'-triiodo-L-thyronine sulfate + iodide + A + H(+) = L-thyroxine sulfate + AH2. The catalysed reaction is 3,3'-diiodo-L-thyronine sulfate + iodide + A + H(+) = 3,3',5-triiodo-L-thyronine sulfate + AH2. With respect to regulation, lacks sensitivity to 6-n-propylthiouracil. Plays a crucial role in the metabolism of thyroid hormones (TH) and has specific roles in TH activation and inactivation by deiodination. Catalyzes the deiodination of L-thyroxine (T4) to 3,5,3'-triiodothyronine (T3) and 3,3',5'-triiodothyronine (rT3) to 3,3'-diiodothyronine (3,3'-T2) via outer-ring deiodination (ORD). Catalyzes the deiodiantion of T4 to rT3 and T3 to 3,3'-T2 via inner-ring deiodination (IRD). Catalyzes the deiodination of 3',5'-diiodothyronine (3',5'-T2) to 3'-monoiodothyronine (3'-T1) via ORD. Catalyzes the deiodination of 3,5-diiodothyronine (3,5-T2) to 3-monoiodothyronine (3-T1) and 3,3'-T2 to 3-T1 via IRD. Catalyzes the phenolic ring deiodinations of 3,3',5'-triiodothyronamine, 3',5'-diiodothyronamine and 3,3'-diiodothyronamine as well as tyrosyl ring deiodinations of 3,5,3'-triiodothyronamine and 3,5-diiodothyronamine. Catalyzes the deiodination of L-thyroxine sulfate and 3,3',5-triiodo-L-thyronine sulfate via IRD and of 3,3',5'-triiodo-L-thyronine sulfate via ORD. The protein is Type I iodothyronine deiodinase (dio1) of Xenopus laevis (African clawed frog).